Consider the following 609-residue polypeptide: Oxidoreductase tpcJ (609 aa).

A signal peptide spans 1-16 (MITVIKWLVSGCCALA). Asparagine 63, asparagine 107, asparagine 113, asparagine 240, asparagine 283, asparagine 471, and asparagine 601 each carry an N-linked (GlcNAc...) asparagine glycan. 3 consecutive Plastocyanin-like domains span residues 66–186 (VSQQ…HGPS), 196–351 (PWLL…RYDE), and 429–567 (VDWK…EQPK).

It belongs to the multicopper oxidase family. Specifically expressed in conidia.

It functions in the pathway secondary metabolite biosynthesis. Its function is as follows. Oxidoreductase; part of the gene cluster that mediates the biosynthesis of trypacidin, a mycotoxin with antiprotozoal activity and that plays a role in the infection process. The pathway begins with the synthesis of atrochrysone thioester by the polyketide synthase (PKS) tpcC. The atrochrysone carboxyl ACP thioesterase tpcB then breaks the thioester bond and releases the atrochrysone carboxylic acid from tpcC. The decarboxylase tpcK converts atrochrysone carboxylic acid to atrochrysone which is further reduced into emodin anthrone. The next step is performed by the emodin anthrone oxygenase tpcL that catalyzes the oxidation of emodinanthrone to emodin. Emodin O-methyltransferase encoded by tpcA catalyzes methylation of the 8-hydroxy group of emodin to form questin. Ring cleavage of questin by questin oxidase tpcI leads to desmethylsulochrin via several intermediates including questin epoxide. Another methylation step catalyzed by tpcM leads to the formation of sulochrin which is further converted to monomethylsulfochrin by tpcH. Finally, the tpcJ catalyzes the conversion of monomethylsulfochrin to trypacidin. Trypacidin is toxic for human pulmonary and bronchial epithelial cells by initiating the intracellular formation of nitric oxide (NO) and hydrogen peroxide (H(2)O(2)), thus triggering host necrotic cell death. The trypacidin pathway is also able to produce endocrocin via a distinct route from the endocrocin Enc pathway. The chain is Oxidoreductase tpcJ from Aspergillus fumigatus (strain ATCC MYA-4609 / CBS 101355 / FGSC A1100 / Af293) (Neosartorya fumigata).